A 564-amino-acid chain; its full sequence is Arginine--tRNA ligase (564 aa).

Positions P122–H132 match the 'HIGH' region motif.

It belongs to the class-I aminoacyl-tRNA synthetase family. As to quaternary structure, monomer.

Its subcellular location is the cytoplasm. The catalysed reaction is tRNA(Arg) + L-arginine + ATP = L-arginyl-tRNA(Arg) + AMP + diphosphate. This chain is Arginine--tRNA ligase, found in Lactococcus lactis subsp. cremoris (strain MG1363).